The primary structure comprises 275 residues: Probable ABC transporter permease protein PH1216 (275 aa).

6 helical membrane passes run 10–30, 73–93, 105–125, 137–157, 181–203, and 241–261; these read LLYI…WSAI, IFTT…GFTI, LLAL…IPLV, ILGL…LLFT, IYTK…YQFT, and IQMA…IALG. The region spanning 68–260 is the ABC transmembrane type-1 domain; that stretch reads ILNSLIFTTF…LPTLLIMIAL (193 aa).

This sequence belongs to the binding-protein-dependent transport system permease family. MalFG subfamily.

Its subcellular location is the cell membrane. Probably part of a binding-protein-dependent transport system PH1214/15/16. Probably responsible for the translocation of the substrate across the membrane. The protein is Probable ABC transporter permease protein PH1216 of Pyrococcus horikoshii (strain ATCC 700860 / DSM 12428 / JCM 9974 / NBRC 100139 / OT-3).